Reading from the N-terminus, the 2472-residue chain is Spectrin alpha chain, non-erythrocytic 1 (2472 aa).

Met1 bears the N-acetylmethionine mark. Spectrin repeat units follow at residues 45–146, 150–251, 256–358, 361–465, 468–570, 574–676, 679–781, 785–888, and 891–961; these read RFQF…IKLL, KLVQ…QGKL, EVQR…ARLD, YRLQ…QYEQ, DLQL…AQLA, HLQQ…KLRE, QQQQ…QKLA, RLQQ…DLED, and QAQQ…QQVA. Position 587 is a phosphoserine (Ser587). N6-acetyllysine is present on Lys637. Lys803 is subject to N6-acetyllysine. Residues Ser924, Ser982, Ser999, Ser1029, Ser1031, and Ser1041 each carry the phosphoserine modification. Positions 967–1026 constitute an SH3 domain; sequence TGKELVLALYDYQEKSPREVTMKKGDILTLLNSTNKDWWKVEVNDRQGFVPAAYVKKLDP. The stretch at 1096-1166 is one Spectrin 10 repeat; it reads LFREANELQQ…LESEGLMAEE (71 aa). The residue at position 1176 (Tyr1176) is a Phosphotyrosine. Ser1190, Ser1207, Ser1217, Ser1291, Ser1306, Ser1323, and Ser1338 each carry phosphoserine. The Spectrin 11 repeat unit spans residues 1233–1336; sequence HEVQRFHRDA…RADQRKAKLG (104 aa). Spectrin repeat units follow at residues 1339 to 1441 and 1446 to 1549; these read HDLQ…RMML and ELQL…KLGE. Lys1519 carries the N6-acetyllysine modification. Residues Ser1550, Ser1557, Ser1578, Ser1615, and Ser1647 each carry the phosphoserine modification. 7 Spectrin repeats span residues 1552 to 1656, 1659 to 1762, 1764 to 1868, 1871 to 1974, 1978 to 2081, 2092 to 2194, and 2206 to 2310; these read TLQQ…KLKE, KQQN…KLSE, HRLH…RLEE, EYQQ…KLDE, FLQF…KLLE, LFLT…LELQ, and LRQE…NLEQ. Phosphothreonine is present on Thr2020. At Lys2052 the chain carries N6-acetyllysine. Thr2066 carries the post-translational modification Phosphothreonine. EF-hand domains follow at residues 2323–2358, 2366–2401, and 2404–2439; these read EALK…LGYD, EPDP…RETE, and KSSE…EQAD. Ca(2+) contacts are provided by Asp2336, Asp2338, Ser2340, Arg2342, Glu2347, Asp2379, Asn2381, Asp2383, His2385, and Glu2390. Lys2421 is subject to N6-acetyllysine.

It belongs to the spectrin family. As to quaternary structure, like erythrocyte spectrin, the spectrin-like proteins are capable of forming dimers which can further associate to tetramers. Interacts (via C-terminal spectrin repeats) with TRPC4. Interacts with CALM and EMD. Interacts with isoform 1 of ACP1. Identified in a complex with ACTN4, CASK, IQGAP1, MAGI2, NPHS1 and SPTBN1. Interacts with SHANK3 (via ANK repeats). Interacts with CLN3; this interaction regulates the fodrin localization at the plasma membrane. In terms of processing, phosphorylation of Tyr-1176 decreases sensitivity to cleavage by calpain in vitro.

It is found in the cytoplasm. The protein localises to the cytoskeleton. It localises to the cell cortex. Its function is as follows. Fodrin, which seems to be involved in secretion, interacts with calmodulin in a calcium-dependent manner and is thus candidate for the calcium-dependent movement of the cytoskeleton at the membrane. This Mus musculus (Mouse) protein is Spectrin alpha chain, non-erythrocytic 1 (Sptan1).